The sequence spans 312 residues: DNA-directed RNA polymerase subunit alpha (312 aa).

The alpha N-terminal domain (alpha-NTD) stretch occupies residues 1–229 (MLQYQIDRID…ELFQPLATVT (229 aa)). The interval 241-312 (SPEAQIPLEE…ISIPQSRTSV (72 aa)) is alpha C-terminal domain (alpha-CTD).

Belongs to the RNA polymerase alpha chain family. In cyanobacteria the RNAP catalytic core is composed of 2 alpha, 1 beta, 1 beta', 1 gamma and 1 omega subunit. When a sigma factor is associated with the core the holoenzyme is formed, which can initiate transcription.

It carries out the reaction RNA(n) + a ribonucleoside 5'-triphosphate = RNA(n+1) + diphosphate. DNA-dependent RNA polymerase catalyzes the transcription of DNA into RNA using the four ribonucleoside triphosphates as substrates. The polypeptide is DNA-directed RNA polymerase subunit alpha (Prochlorococcus marinus (strain MIT 9215)).